The sequence spans 703 residues: Protein O-mannosyl-transferase TMEM260 (703 aa).

The next 8 helical transmembrane spans lie at 20-40 (GALR…TLTL), 68-88 (PLFT…SVAY), 90-110 (VNLL…YTVF), 137-157 (IAAE…ALTV), 182-202 (SLCN…WILF), 218-238 (LTLA…SSYL), 314-334 (KSSV…FFAW), and 352-372 (FWLQ…ATLV). Residues N403 and N564 are each glycosylated (N-linked (GlcNAc...) asparagine).

It belongs to the glycosyltransferase 117 (GT117) family.

It is found in the endoplasmic reticulum membrane. The catalysed reaction is a di-trans,poly-cis-dolichyl beta-D-mannosyl phosphate + L-seryl-[protein] = 3-O-(alpha-D-mannosyl)-L-seryl-[protein] + a di-trans,poly-cis-dolichyl phosphate + H(+). The enzyme catalyses a di-trans,poly-cis-dolichyl beta-D-mannosyl phosphate + L-threonyl-[protein] = 3-O-(alpha-D-mannosyl)-L-threonyl-[protein] + a di-trans,poly-cis-dolichyl phosphate + H(+). Its function is as follows. O-mannosyl-transferase that transfers mannosyl residues to the hydroxyl group of serine or threonine residues of proteins. Specifically glycosylates the IPT/TIG domain of target proteins, such as MET and MST1R/RON. TMEM260-mediated O-mannosylated residues are composed of single mannose glycans that are not elongated or modified. The sequence is that of Protein O-mannosyl-transferase TMEM260 from Mus musculus (Mouse).